A 356-amino-acid polypeptide reads, in one-letter code: UDP-N-acetylenolpyruvoylglucosamine reductase (356 aa).

The FAD-binding PCMH-type domain maps to 19–227 (LGGPAARFCS…RDAVLSLRRS (209 aa)). Arginine 167 is an active-site residue. Residue serine 244 is the Proton donor of the active site. Glutamate 348 is an active-site residue.

This sequence belongs to the MurB family. The cofactor is FAD.

It is found in the cytoplasm. The catalysed reaction is UDP-N-acetyl-alpha-D-muramate + NADP(+) = UDP-N-acetyl-3-O-(1-carboxyvinyl)-alpha-D-glucosamine + NADPH + H(+). Its pathway is cell wall biogenesis; peptidoglycan biosynthesis. Its function is as follows. Cell wall formation. In Thermobifida fusca (strain YX), this protein is UDP-N-acetylenolpyruvoylglucosamine reductase.